We begin with the raw amino-acid sequence, 1153 residues long: Duffy receptor beta form (1153 aa).

Positions 1–21 are cleaved as a signal peptide; that stretch reads MEGKKKRPLFFLLVLLLSHKA. The Extracellular portion of the chain corresponds to 22-1085; the sequence is NNVLFERMKG…YECFTKGSST (1064 aa). Asn-134, Asn-179, and Asn-202 each carry an N-linked (GlcNAc...) asparagine glycan. 2 disulfide bridges follow: Cys-214/Cys-243 and Cys-227/Cys-234. N-linked (GlcNAc...) asparagine glycans are attached at residues Asn-252 and Asn-348. Disulfide bonds link Cys-297-Cys-374, Cys-412-Cys-429, Cys-424-Cys-504, and Cys-433-Cys-502. 2 N-linked (GlcNAc...) asparagine glycosylation sites follow: Asn-430 and Asn-467. Disordered regions lie at residues 520–545, 565–591, 612–631, and 655–981; these read LKSA…GAEK, DEAA…DNIE, RGAT…SYSG, and ENSE…LYSH. 2 stretches are compositionally biased toward polar residues: residues 531–542 and 574–586; these read SHSTIQPMSSSG and NGNQ…NIKG. 2 N-linked (GlcNAc...) asparagine glycosylation sites follow: Asn-576 and Asn-626. Positions 661–675 are enriched in basic and acidic residues; that stretch reads LETKHKIFEPSKDNS. Residues 677–733 are compositionally biased toward polar residues; that stretch reads NSENSGSMEFKATSSNPITEAVESSSAEGQVQEDSAHRSVNTGRDNSTISAATSDDG. A glycan (N-linked (GlcNAc...) asparagine) is linked at Asn-722. Residues 791–800 show a composition bias toward basic and acidic residues; it reads IDGKNVDIAE. Positions 819 to 834 are enriched in polar residues; sequence TDNGNVPRSGNKQNEG. Asn-847 and Asn-856 each carry an N-linked (GlcNAc...) asparagine glycan. The segment covering 867 to 878 has biased composition (basic and acidic residues); it reads GNEKDFQKHDFM. Residues 884–942 show a composition bias toward low complexity; that stretch reads NDQTSSDQTSSDQTSSNQTSSDQTSSNQTSSDQTSSDQISSDQTSSDQTSSNQTSSDQT. N-linked (GlcNAc...) asparagine glycosylation is found at Asn-900, Asn-910, and Asn-935. Over residues 945 to 969 the composition is skewed to basic and acidic residues; that stretch reads TEEHHRDNVRNPEIKSSEDMSKGDF. The span at 971 to 981 shows a compositional bias: polar residues; sequence RNSNSNELYSH. Residues 1086–1106 form a helical membrane-spanning segment; sequence GIGIVYFATGGAFLIILLLFV. Topologically, residues 1107–1153 are cytoplasmic; sequence SKNVASNDYEEEATFDEFVEYSDDIHRTPLMPNHIEHMQQFTPLDYS.

It localises to the membrane. Binds to Neu5Gc-sialylated receptors on macaque erythrocytes. In Plasmodium knowlesi, this protein is Duffy receptor beta form.